The primary structure comprises 456 residues: Equilibrative nucleoside transporter 2 (456 aa).

The chain crosses the membrane as a helical span at residues 13–33 (LVGISFFILGLGTLLPWNFFI). Asparagine 48 and asparagine 57 each carry an N-linked (GlcNAc...) asparagine glycan. 5 consecutive transmembrane segments (helical) span residues 70 to 90 (WVTL…SFLY), 99 to 119 (ILGS…LVKV), 124 to 144 (GPFF…SAVL), 162 to 182 (LFLS…LLSM), and 193 to 213 (LGYF…YLSL). N-linked (GlcNAc...) asparagine glycosylation occurs at asparagine 225. Serine 252 carries the post-translational modification Phosphoserine. The next 5 membrane-spanning stretches (helical) occupy residues 291-311 (WLTA…FPAI), 324-344 (WSQF…DWLG), 360-380 (LLPL…LCHV), 386-406 (LPIL…FAVS), and 432-452 (ALMT…SFLF).

This sequence belongs to the SLC29A/ENT transporter (TC 2.A.57) family. Post-translationally, glycosylated. In terms of tissue distribution, highly expressed in skeletal muscle. Expressed in liver, lung, placenta, brain, heart, kidney and ovarian tissues. Expressed in testis at the blood-brain-barrier.

The protein localises to the apical cell membrane. Its subcellular location is the basolateral cell membrane. It carries out the reaction inosine(in) = inosine(out). The enzyme catalyses adenosine(in) = adenosine(out). The catalysed reaction is uridine(out) = uridine(in). It catalyses the reaction thymidine(in) = thymidine(out). It carries out the reaction hypoxanthine(out) = hypoxanthine(in). The enzyme catalyses adenine(out) = adenine(in). The catalysed reaction is cytidine(in) = cytidine(out). It catalyses the reaction thymine(out) = thymine(in). It carries out the reaction uracil(in) = uracil(out). The enzyme catalyses guanine(out) = guanine(in). The catalysed reaction is guanosine(in) = guanosine(out). Bidirectional uniporter involved in the facilitative transport of nucleosides and nucleobases, and contributes to maintaining their cellular homeostasis. Functions as a Na(+)-independent, passive transporter. Involved in the transport of nucleosides such as inosine, adenosine, uridine, thymidine, cytidine and guanosine. Also able to transport purine nucleobases (hypoxanthine, adenine, guanine) and pyrimidine nucleobases (thymine, uracil). Involved in nucleoside transport at basolateral membrane of kidney cells, allowing liver absorption of nucleoside metabolites. Mediates apical nucleoside uptake into Sertoli cells, thereby regulating the transport of nucleosides in testis across the blood-testis-barrier. Mediates both the influx and efflux of hypoxanthine in skeletal muscle microvascular endothelial cells to control the amount of intracellular hypoxanthine available for xanthine oxidase-mediated ROS production. Its function is as follows. Non functional nucleoside transporter protein for adenosine or thymidine transport. Does not express on cell membrane. This Homo sapiens (Human) protein is Equilibrative nucleoside transporter 2.